Here is a 256-residue protein sequence, read N- to C-terminus: Major prion protein (256 aa).

Residues 1–24 (MVKSHIGSWILVLFVAMWSDVGLC) form the signal peptide. An interaction with GRB2, ERI3 and SYN1 region spans residues 25-233 (KKRPKPGGGW…ESQAYYQRGA (209 aa)). The interval 28–110 (PKPGGGWNTG…QWNKPSKPKT (83 aa)) is disordered. 5 repeat units span residues 54–62 (PQGGGGWGQ), 63–70 (PHGGGWGQ), 71–78 (PHGGGWGQ), 79–86 (PHGGGWGQ), and 87–95 (PHGGGGWGQ). Residues 54–95 (PQGGGGWGQPHGGGWGQPHGGGWGQPHGGGWGQPHGGGGWGQ) are 5 X 8 AA tandem repeats of P-H-G-G-G-W-G-Q. The span at 55-97 (QGGGGWGQPHGGGWGQPHGGGWGQPHGGGWGQPHGGGGWGQGG) shows a compositional bias: gly residues. Residues H64, G65, G66, H72, G73, G74, H80, G81, G82, H88, G90, and G91 each contribute to the Cu(2+) site. Cysteines 182 and 217 form a disulfide. N-linked (GlcNAc...) (complex) asparagine glycosylation is found at N184 and N200. The GPI-anchor amidated alanine moiety is linked to residue A233. Positions 234–256 (SVILFSSPPVILLISFLIFLIVG) are cleaved as a propeptide — removed in mature form.

It belongs to the prion family. Monomer and homodimer. Has a tendency to aggregate into amyloid fibrils containing a cross-beta spine, formed by a steric zipper of superposed beta-strands. Soluble oligomers may represent an intermediate stage on the path to fibril formation. Copper binding may promote oligomerization. Interacts with GRB2, APP, ERI3/PRNPIP and SYN1. Mislocalized cytosolically exposed PrP interacts with MGRN1; this interaction alters MGRN1 subcellular location and causes lysosomal enlargement. Interacts with KIAA1191.

It localises to the cell membrane. Its subcellular location is the golgi apparatus. Its primary physiological function is unclear. Has cytoprotective activity against internal or environmental stresses. May play a role in neuronal development and synaptic plasticity. May be required for neuronal myelin sheath maintenance. May play a role in iron uptake and iron homeostasis. Soluble oligomers are toxic to cultured neuroblastoma cells and induce apoptosis (in vitro). Association with GPC1 (via its heparan sulfate chains) targets PRNP to lipid rafts. Also provides Cu(2+) or Zn(2+) for the ascorbate-mediated GPC1 deaminase degradation of its heparan sulfate side chains. The sequence is that of Major prion protein (PRNP) from Ovis aries (Sheep).